A 234-amino-acid polypeptide reads, in one-letter code: Thiamine import ATP-binding protein ThiQ (234 aa).

Residues 2–230 enclose the ABC transporter domain; that stretch reads LVLDDVQYTY…HPSKTLQAFV (229 aa). 32-39 provides a ligand contact to ATP; sequence GPSGAGKS.

It belongs to the ABC transporter superfamily. Thiamine importer (TC 3.A.1.19.1) family. The complex is composed of two ATP-binding proteins (ThiQ), two transmembrane proteins (ThiP) and a solute-binding protein (ThiB).

The protein localises to the cell inner membrane. It catalyses the reaction thiamine(out) + ATP + H2O = thiamine(in) + ADP + phosphate + H(+). Its function is as follows. Part of the ABC transporter complex ThiBPQ involved in thiamine import. Responsible for energy coupling to the transport system. The sequence is that of Thiamine import ATP-binding protein ThiQ from Vibrio parahaemolyticus serotype O3:K6 (strain RIMD 2210633).